Reading from the N-terminus, the 104-residue chain is Transcription initiation factor IIA subunit 2 (104 aa).

It belongs to the TFIIA subunit 2 family. In terms of assembly, TFIIA is a heterodimer of the large unprocessed subunit 1 and a small subunit gamma.

The protein resides in the nucleus. Functionally, TFIIA is a component of the transcription machinery of RNA polymerase II and plays an important role in transcriptional activation. TFIIA in a complex with TBP mediates transcriptional activity. The chain is Transcription initiation factor IIA subunit 2 from Schistosoma mansoni (Blood fluke).